The following is a 440-amino-acid chain: Ferredoxin--NADP reductase (440 aa).

Positions 17 to 75 constitute a CpcD-like domain; that stretch reads SRVFVYEVVGMRQNEETDQTNYPIRKSGSVFIRVPYNRMNQEMQRITRLGGKIVTIQTV. Residues 99–142 form a disordered region; that stretch reads KSEGNGKATPVKTDSGAKAFAKPPAEEQLKKKDNKGNTMTQAKA. Basic and acidic residues predominate over residues 122-133; the sequence is PAEEQLKKKDNK. An FAD-binding FR-type domain is found at 155 to 279; sequence NAPFIGKVIS…TGPVGKEMLL (125 aa). FAD contacts are provided by residues 214-217, 235-237, Tyr-241, 253-255, and Thr-294; these read RLYS, CVR, and VCS. NADP(+) is bound by residues Ser-217 and Arg-237. NADP(+) contacts are provided by residues Thr-294, 330–331, 360–361, 370–374, 399–400, and Glu-438; these read VP, SR, RMYIQ, and GL.

It belongs to the ferredoxin--NADP reductase type 1 family. The cofactor is FAD.

Its subcellular location is the cellular thylakoid membrane. The enzyme catalyses 2 reduced [2Fe-2S]-[ferredoxin] + NADP(+) + H(+) = 2 oxidized [2Fe-2S]-[ferredoxin] + NADPH. The chain is Ferredoxin--NADP reductase (petH) from Nostoc sp. (strain ATCC 29151 / PCC 7119) (Anabaena sp.).